The following is a 270-amino-acid chain: MGEQQLDCALDLMRRLPPQHCDKNLTDLIDLCPHLVDDLLSTIDQPLKIAADRETGKQYLLCDYNRDGDSYRSPWSNTYDPPLEDGQLPSEKRRKMEIEANAAFESYRDLYFEGGVSSVYFWDLDNGGFAGIVLIKKEGDGAKNITGCWDSIHVIEITERARQAHYKLTSTIMLWLQTNKSSSGVMNLGGSLTRQHEMDAPINDQNTHLANMGRMIEDQESKMRLTINEIYFGKTKKVMSDLRSTEKQSELEKQDEIVRELNNAMANRGN.

It belongs to the F-actin-capping protein beta subunit family. In terms of assembly, component of the F-actin capping complex, composed of a heterodimer of an alpha and a beta subunit.

The protein resides in the cytoplasm. It localises to the cytoskeleton. Its function is as follows. F-actin-capping proteins bind in a Ca(2+)-independent manner to the fast growing ends of actin filaments (barbed end) thereby blocking the exchange of subunits at these ends. Unlike other capping proteins (such as gelsolin and severin), these proteins do not sever actin filaments. This Caenorhabditis elegans protein is F-actin-capping protein subunit beta (cap-2).